The primary structure comprises 324 residues: Ribose 1,5-bisphosphate isomerase (324 aa).

Substrate contacts are provided by residues 22–25 (RGAG) and arginine 65. Cysteine 135 (proton acceptor) is an active-site residue. 137–139 (SKA) contacts substrate. Catalysis depends on aspartate 204, which acts as the Proton donor. Lysine 240 is a binding site for substrate.

Belongs to the eIF-2B alpha/beta/delta subunits family. R15P isomerase subfamily.

The catalysed reaction is alpha-D-ribose 1,5-bisphosphate = D-ribulose 1,5-bisphosphate. In terms of biological role, catalyzes the isomerization of ribose 1,5-bisphosphate (R15P) to ribulose 1,5-bisphosphate (RuBP), the CO(2) acceptor and substrate for RubisCO. Functions in an archaeal AMP degradation pathway, together with AMP phosphorylase and RubisCO. This Pyrococcus furiosus (strain ATCC 43587 / DSM 3638 / JCM 8422 / Vc1) protein is Ribose 1,5-bisphosphate isomerase.